We begin with the raw amino-acid sequence, 299 residues long: Oxygen-dependent coproporphyrinogen-III oxidase (299 aa).

Residue Ser92 participates in substrate binding. A divalent metal cation-binding residues include His96 and His106. The active-site Proton donor is His106. Residue 108-110 participates in substrate binding; it reads NVR. Residues His145 and His175 each coordinate a divalent metal cation. The important for dimerization stretch occupies residues 240 to 275; it reads YVEFNLVWDRGTLFGLQTGGRTESILMSMPPLVRWE. 258–260 provides a ligand contact to substrate; it reads GGR.

This sequence belongs to the aerobic coproporphyrinogen-III oxidase family. In terms of assembly, homodimer. Requires a divalent metal cation as cofactor.

It is found in the cytoplasm. The catalysed reaction is coproporphyrinogen III + O2 + 2 H(+) = protoporphyrinogen IX + 2 CO2 + 2 H2O. It participates in porphyrin-containing compound metabolism; protoporphyrin-IX biosynthesis; protoporphyrinogen-IX from coproporphyrinogen-III (O2 route): step 1/1. In terms of biological role, involved in the heme biosynthesis. Catalyzes the aerobic oxidative decarboxylation of propionate groups of rings A and B of coproporphyrinogen-III to yield the vinyl groups in protoporphyrinogen-IX. The chain is Oxygen-dependent coproporphyrinogen-III oxidase from Salmonella arizonae (strain ATCC BAA-731 / CDC346-86 / RSK2980).